We begin with the raw amino-acid sequence, 310 residues long: 4-diphosphocytidyl-2-C-methyl-D-erythritol kinase (310 aa).

The active site involves Lys-12. 97–107 (PIGAGLAGGSS) is a binding site for ATP. Asp-139 is a catalytic residue.

Belongs to the GHMP kinase family. IspE subfamily.

It catalyses the reaction 4-CDP-2-C-methyl-D-erythritol + ATP = 4-CDP-2-C-methyl-D-erythritol 2-phosphate + ADP + H(+). Its pathway is isoprenoid biosynthesis; isopentenyl diphosphate biosynthesis via DXP pathway; isopentenyl diphosphate from 1-deoxy-D-xylulose 5-phosphate: step 3/6. Catalyzes the phosphorylation of the position 2 hydroxy group of 4-diphosphocytidyl-2C-methyl-D-erythritol. This Synechococcus sp. (strain CC9311) protein is 4-diphosphocytidyl-2-C-methyl-D-erythritol kinase.